A 562-amino-acid chain; its full sequence is Adenylate kinase isoenzyme 5 (562 aa).

2 adenylate kinase regions span residues 133–316 and 377–559; these read KIIL…MAVD and KIIF…TAID. 142–147 is an ATP binding site; sequence GSGKGT. The segment at 162 to 193 is NMP 1; that stretch reads SVGELLRKKIHSTSSNRKWSLIAKIITTGELA. Residues R168, 191–193, 219–222, and Q226 each bind AMP; these read ELA and GFPR. An LID 1 region spans residues 256-266; sequence KRAEQQGRPDD. R257 provides a ligand contact to ATP. Residues R263 and R274 each contribute to the AMP site. 386–391 contacts ATP; the sequence is GSGKGT. An NMP 2 region spans residues 406-435; the sequence is STDELLQNELSSESGRSKLIRDIMERGELV. AMP is bound by residues T407, 433-435, 462-465, and Q469; these read ELV and GYPR. Residues 499 to 509 form an LID 2 region; sequence QRSRNSPQADD. Residue R500 coordinates ATP. R517 serves as a coordination point for AMP. G545 contributes to the ATP binding site.

The protein belongs to the adenylate kinase family. In terms of assembly, monomer.

Its subcellular location is the cytoplasm. The enzyme catalyses AMP + ATP = 2 ADP. It carries out the reaction a 2'-deoxyribonucleoside 5'-diphosphate + ATP = a 2'-deoxyribonucleoside 5'-triphosphate + ADP. The catalysed reaction is a ribonucleoside 5'-diphosphate + ATP = a ribonucleoside 5'-triphosphate + ADP. Its function is as follows. Nucleoside monophosphate (NMP) kinase that catalyzes the reversible transfer of the terminal phosphate group between nucleoside triphosphates and monophosphates. Active on AMP and dAMP with ATP as a donor. When GTP is used as phosphate donor, the enzyme phosphorylates AMP, CMP, and to a small extent dCMP. Also displays broad nucleoside diphosphate kinase activity. The polypeptide is Adenylate kinase isoenzyme 5 (Ak5) (Bos taurus (Bovine)).